The following is a 352-amino-acid chain: Probable tyrosine-protein kinase DDB_G0290471 (352 aa).

Positions 51-333 constitute a Protein kinase domain; it reads IEYVCRLGSG…ISLNQIRSFY (283 aa). ATP contacts are provided by residues 57 to 65 and lysine 78; that span reads LGSGSLCRV. Aspartate 175 serves as the catalytic Proton acceptor.

It belongs to the protein kinase superfamily. TKL Tyr protein kinase family.

The enzyme catalyses L-tyrosyl-[protein] + ATP = O-phospho-L-tyrosyl-[protein] + ADP + H(+). In Dictyostelium discoideum (Social amoeba), this protein is Probable tyrosine-protein kinase DDB_G0290471.